Consider the following 201-residue polypeptide: Glycerol-3-phosphate acyltransferase (201 aa).

The next 5 helical transmembrane spans lie at 4–24 (LVAATLGGYLLGSVPFGLVLT), 55–75 (LATLLLDGGKGAIAVGLVWVL), 80–100 (MVPVAGFAAVLGHNFPVWLGF), 110–130 (IGTLLAAAWPVGLACIGTWLV), and 152–174 (FALYFAGPQYALMAAGLAVMGFY).

This sequence belongs to the PlsY family. As to quaternary structure, probably interacts with PlsX.

It is found in the cell inner membrane. It catalyses the reaction an acyl phosphate + sn-glycerol 3-phosphate = a 1-acyl-sn-glycero-3-phosphate + phosphate. Its pathway is lipid metabolism; phospholipid metabolism. Functionally, catalyzes the transfer of an acyl group from acyl-phosphate (acyl-PO(4)) to glycerol-3-phosphate (G3P) to form lysophosphatidic acid (LPA). This enzyme utilizes acyl-phosphate as fatty acyl donor, but not acyl-CoA or acyl-ACP. In Paramagnetospirillum magneticum (strain ATCC 700264 / AMB-1) (Magnetospirillum magneticum), this protein is Glycerol-3-phosphate acyltransferase.